The chain runs to 225 residues: Peptidyl-tRNA hydrolase (225 aa).

TRNA is bound at residue Y14. The active-site Proton acceptor is the H19. Residues F64, N66, and N112 each coordinate tRNA. The interval 187–225 is disordered; it reads MQPPKPEKPKGEAKPAAPEAPEAAPDTRSALQRLADRFR. The segment covering 200–210 has biased composition (low complexity); that stretch reads KPAAPEAPEAA.

This sequence belongs to the PTH family. In terms of assembly, monomer.

It is found in the cytoplasm. It catalyses the reaction an N-acyl-L-alpha-aminoacyl-tRNA + H2O = an N-acyl-L-amino acid + a tRNA + H(+). In terms of biological role, hydrolyzes ribosome-free peptidyl-tRNAs (with 1 or more amino acids incorporated), which drop off the ribosome during protein synthesis, or as a result of ribosome stalling. Its function is as follows. Catalyzes the release of premature peptidyl moieties from peptidyl-tRNA molecules trapped in stalled 50S ribosomal subunits, and thus maintains levels of free tRNAs and 50S ribosomes. In Cereibacter sphaeroides (strain ATCC 17025 / ATH 2.4.3) (Rhodobacter sphaeroides), this protein is Peptidyl-tRNA hydrolase.